A 114-amino-acid polypeptide reads, in one-letter code: MVNEMRDDTRPHMTREDMEKRANEVANLLKTLSHPVRLMLVCTLVEGEFSVGELEQQIGIGQPTLSQQLGVLRESGIVETRRNIKQIFYRLTEAKAAQLVNALYTIFCAQEKQA.

Residues 17–111 (DMEKRANEVA…ALYTIFCAQE (95 aa)) enclose the HTH arsR-type domain. Residues 51–74 (VGELEQQIGIGQPTLSQQLGVLRE) constitute a DNA-binding region (H-T-H motif).

Its function is as follows. Represses an operon that comprises itself, XF_0764, XF_0765, XF_0766 and blh. Binds to a palindromic AT-rich sequence spanning the -10 region of the blh promoter and blocks transcription of the operon. This Xylella fastidiosa (strain 9a5c) protein is Biofilm growth-associated repressor (bigR).